A 309-amino-acid chain; its full sequence is Pyridoxal 5'-phosphate synthase subunit PDX1.1 (309 aa).

M1 bears the N-acetylmethionine mark. D41 serves as a coordination point for D-ribose 5-phosphate. K98 serves as the catalytic Schiff-base intermediate with D-ribose 5-phosphate. Residue G170 coordinates D-ribose 5-phosphate. D-glyceraldehyde 3-phosphate is bound at residue R182. D-ribose 5-phosphate contacts are provided by residues G231 and 252–253 (GS).

The protein belongs to the PdxS/SNZ family. Homodimer or heterodimer with PDX1.2 or PDX1.3. Interacts with PDX2. Expressed in flowers, shoots, leaves and weakly in roots.

It is found in the cytoplasm. It catalyses the reaction aldehydo-D-ribose 5-phosphate + D-glyceraldehyde 3-phosphate + L-glutamine = pyridoxal 5'-phosphate + L-glutamate + phosphate + 3 H2O + H(+). The protein operates within cofactor biosynthesis; pyridoxal 5'-phosphate biosynthesis. Its function is as follows. Catalyzes the formation of pyridoxal 5'-phosphate from ribose 5-phosphate (RBP), glyceraldehyde 3-phosphate (G3P) and ammonia. The ammonia is provided by PDX2. Can also use ribulose 5-phosphate and dihydroxyacetone phosphate as substrates, resulting from enzyme-catalyzed isomerization of RBP and G3P, respectively. Also plays an indirect role in resistance to singlet oxygen-generating photosensitizers. This is Pyridoxal 5'-phosphate synthase subunit PDX1.1 (PDX11) from Arabidopsis thaliana (Mouse-ear cress).